Reading from the N-terminus, the 206-residue chain is dITP/XTP pyrophosphatase (206 aa).

7–12 (SCHGYK) is a substrate binding site. The Proton acceptor role is filled by Asp70. A Mg(2+)-binding site is contributed by Asp70. Residues Thr71, 154–157 (FGYD), Lys177, and 182–183 (HR) contribute to the substrate site.

The protein belongs to the HAM1 NTPase family. Homodimer. The cofactor is Mg(2+).

It carries out the reaction XTP + H2O = XMP + diphosphate + H(+). The catalysed reaction is dITP + H2O = dIMP + diphosphate + H(+). It catalyses the reaction ITP + H2O = IMP + diphosphate + H(+). Functionally, pyrophosphatase that catalyzes the hydrolysis of nucleoside triphosphates to their monophosphate derivatives, with a high preference for the non-canonical purine nucleotides XTP (xanthosine triphosphate), dITP (deoxyinosine triphosphate) and ITP. Seems to function as a house-cleaning enzyme that removes non-canonical purine nucleotides from the nucleotide pool, thus preventing their incorporation into DNA/RNA and avoiding chromosomal lesions. The protein is dITP/XTP pyrophosphatase of Chlamydia caviae (strain ATCC VR-813 / DSM 19441 / 03DC25 / GPIC) (Chlamydophila caviae).